Reading from the N-terminus, the 276-residue chain is MSTNCMFNLDNDYIYCKYWKPITYPKALVFISHGAGEHSGRYDELAENISSLGILVFSHDHIGHGRSNGEKMMIDDFGKYVRDVVQHVVTIKSTYPGVPVFLLGHSMGATISILAACDNPNLFTAMILMSPLVNADAVPRLNLLAAKLMGTITPNASVGKLCPESVSRDMDEVYKYQYDPLVNHEKIKAGFASQVLKATNKVRKIIPKINTPTLILQGTNNEISDVSGAYYFMQHANCNREIKIYEGAKHHLHKETDEVKKSVMKEIETWIFNRVK.

Belongs to the orthopoxvirus OPG043 family.

The protein is Monoglyceride lipase homolog (OPG043) of Cynomys gunnisoni (Gunnison's prairie dog).